Here is a 375-residue protein sequence, read N- to C-terminus: 1-deoxy-D-xylulose 5-phosphate reductoisomerase (375 aa).

NADPH-binding residues include threonine 10, glycine 11, serine 12, valine 13, lysine 37, and asparagine 114. Position 115 (lysine 115) interacts with 1-deoxy-D-xylulose 5-phosphate. Position 116 (glutamate 116) interacts with NADPH. Aspartate 136 serves as a coordination point for Mn(2+). Positions 137, 138, 162, and 185 each coordinate 1-deoxy-D-xylulose 5-phosphate. Glutamate 138 is a binding site for Mn(2+). Residue glycine 191 participates in NADPH binding. Residues serine 198, asparagine 203, lysine 204, and glutamate 207 each contribute to the 1-deoxy-D-xylulose 5-phosphate site. Glutamate 207 lines the Mn(2+) pocket.

The protein belongs to the DXR family. It depends on Mg(2+) as a cofactor. Mn(2+) serves as cofactor.

It carries out the reaction 2-C-methyl-D-erythritol 4-phosphate + NADP(+) = 1-deoxy-D-xylulose 5-phosphate + NADPH + H(+). It functions in the pathway isoprenoid biosynthesis; isopentenyl diphosphate biosynthesis via DXP pathway; isopentenyl diphosphate from 1-deoxy-D-xylulose 5-phosphate: step 1/6. In terms of biological role, catalyzes the NADPH-dependent rearrangement and reduction of 1-deoxy-D-xylulose-5-phosphate (DXP) to 2-C-methyl-D-erythritol 4-phosphate (MEP). In Sulfurihydrogenibium sp. (strain YO3AOP1), this protein is 1-deoxy-D-xylulose 5-phosphate reductoisomerase.